The sequence spans 356 residues: MGPASEVYGRKLPFFLGYVLFVLSQIPVALGHDAPTVLVFRFLGGVTSSVCPAITGGWLADFLLPAERGVAVAIFAATTLVGPSIGAITSQVQLQTAMGWRMTAWTTMILGIVSGVAGFIILPETYLPVVEQRHARKLRQETKDWALHSRLDEKPVSIREFLTKYLTLPISMLVSEPILLSMTIYISFTFGLIYLLFVAYPVSFVQERGYGAIDGTLPLLSICAGIIVGAFYASWSTLTTVKQKAASGNALVPEDRLHPMIVGAVSLAIGLLWFAWTSSPAISPWPQILAGIPIGVGVQVILLQSLAYLIDIYTTGAASAISGTMIVRSLVGGTFPLFAPQMYRKFGVSIAVLIIQ.

Helical transmembrane passes span 12-32 (LPFF…ALGH), 42-62 (FLGG…LADF), 69-89 (GVAV…GAIT), 102-122 (MTAW…FIIL), 178-198 (ILLS…LLFV), 211-231 (GAID…VGAF), 257-277 (LHPM…FAWT), 288-308 (ILAG…SLAY), and 320-340 (AISG…LFAP).

It belongs to the major facilitator superfamily. CAR1 family.

Its subcellular location is the membrane. Functionally, MFS-type transporter; part of the gene cluster that mediates the biosynthesis of azaterrilone A and other azaphilones, a class of fungal metabolites characterized by a highly oxygenated pyrano-quinone bicyclic core and exhibiting a broad range of bioactivities. The chain is MFS-type transporter tazK from Aspergillus terreus (strain NIH 2624 / FGSC A1156).